A 510-amino-acid chain; its full sequence is NAD(P)H-quinone oxidoreductase subunit 2, chloroplastic (510 aa).

13 helical membrane-spanning segments follow: residues 26–46 (LFDG…ILLL), 57–77 (IPWL…ALLF), 99–119 (IFQV…VEYI), 124–144 (MAIT…MFLC), 149–169 (LITI…LSGY), 184–204 (LLMG…LYGL), 227–247 (PGIS…LSPA), 295–315 (WHLL…LIAI), 323–343 (MLAY…IVGD), 354–374 (YMLF…LFGL), 395–415 (ALSL…AGFF), 418–438 (LYLF…IALV), and 484–504 (MIVC…IIAI).

It belongs to the complex I subunit 2 family. As to quaternary structure, NDH is composed of at least 16 different subunits, 5 of which are encoded in the nucleus.

The protein resides in the plastid. It localises to the chloroplast thylakoid membrane. The catalysed reaction is a plastoquinone + NADH + (n+1) H(+)(in) = a plastoquinol + NAD(+) + n H(+)(out). It catalyses the reaction a plastoquinone + NADPH + (n+1) H(+)(in) = a plastoquinol + NADP(+) + n H(+)(out). NDH shuttles electrons from NAD(P)H:plastoquinone, via FMN and iron-sulfur (Fe-S) centers, to quinones in the photosynthetic chain and possibly in a chloroplast respiratory chain. The immediate electron acceptor for the enzyme in this species is believed to be plastoquinone. Couples the redox reaction to proton translocation, and thus conserves the redox energy in a proton gradient. The polypeptide is NAD(P)H-quinone oxidoreductase subunit 2, chloroplastic (Trachelium caeruleum (Blue throatwort)).